A 322-amino-acid polypeptide reads, in one-letter code: Phospholipase A1 (322 aa).

A signal peptide spans 1–18 (MNFKYSILFICFGTLDRG). C23 and C106 form a disulfide bridge. S156 (nucleophile) is an active-site residue. D184 (charge relay system) is an active-site residue. Intrachain disulfides connect C195-C200 and C238-C246. Residue H248 is the Charge relay system of the active site. Intrachain disulfides connect C263/C290, C264/C315, and C283/C288.

It belongs to the AB hydrolase superfamily. Lipase family. In terms of processing, contains six disulfide bonds. Is not glycosylated. In terms of tissue distribution, expressed by the venom gland.

The protein resides in the secreted. It catalyses the reaction a 1,2-diacyl-sn-glycero-3-phosphocholine + H2O = a 2-acyl-sn-glycero-3-phosphocholine + a fatty acid + H(+). Functionally, catalyzes the hydrolysis of phosphatidylcholine with phospholipase A1 activity. Shows hemolytic activity. Acts as an allergen. This is Phospholipase A1 from Polybia paulista (Neotropical social wasp).